The chain runs to 860 residues: Ribosome-releasing factor 2, mitochondrial (860 aa).

A tr-type G domain is found at 45-337; it reads DRTRNIGIIA…AVVNFLPSPL (293 aa). GTP is bound by residues 54–61, 118–122, and 172–175; these read AHIDAGKT, DTPGH, and NKMD.

It belongs to the TRAFAC class translation factor GTPase superfamily. Classic translation factor GTPase family. EF-G/EF-2 subfamily.

It localises to the mitochondrion. Mitochondrial GTPase that mediates the disassembly of ribosomes from messenger RNA at the termination of mitochondrial protein biosynthesis. Not involved in the GTP-dependent ribosomal translocation step during translation elongation. The protein is Ribosome-releasing factor 2, mitochondrial of Debaryomyces hansenii (strain ATCC 36239 / CBS 767 / BCRC 21394 / JCM 1990 / NBRC 0083 / IGC 2968) (Yeast).